The following is a 305-amino-acid chain: Fructose-bisphosphate aldolase (305 aa).

Residue Ser49 coordinates D-glyceraldehyde 3-phosphate. Asp80 acts as the Proton donor in catalysis. Zn(2+) contacts are provided by His81, Asp102, Glu132, and His178. Residue Gly179 participates in dihydroxyacetone phosphate binding. Position 208 (His208) interacts with Zn(2+). Dihydroxyacetone phosphate contacts are provided by residues 209-211 (GAS) and 251-254 (NTDT).

This sequence belongs to the class II fructose-bisphosphate aldolase family. As to quaternary structure, homotetramer. Zn(2+) is required as a cofactor.

The catalysed reaction is beta-D-fructose 1,6-bisphosphate = D-glyceraldehyde 3-phosphate + dihydroxyacetone phosphate. It functions in the pathway carbohydrate degradation; glycolysis; D-glyceraldehyde 3-phosphate and glycerone phosphate from D-glucose: step 4/4. In terms of biological role, catalyzes the aldol condensation of dihydroxyacetone phosphate (DHAP or glycerone-phosphate) with glyceraldehyde 3-phosphate (G3P) to form fructose 1,6-bisphosphate (FBP) in gluconeogenesis and the reverse reaction in glycolysis. In Thermus caldophilus, this protein is Fructose-bisphosphate aldolase.